Consider the following 522-residue polypeptide: Poly(A) polymerase (522 aa).

ATP is bound by residues 63–65 (YGS), 76–78 (DID), D130, K193, Y202, and 211–212 (GI). The Mg(2+) site is built by D76, D78, and D130. Residues 475 to 522 (QLKAKEENSIPNEEKKEQLKKEMKQEANTIVKNSSTDDDFMKRFTRKN) form a disordered region. The segment covering 476-499 (LKAKEENSIPNEEKKEQLKKEMKQ) has biased composition (basic and acidic residues).

The protein belongs to the poly(A) polymerase family. It depends on Mg(2+) as a cofactor. The cofactor is Mn(2+).

The protein resides in the cytoplasm. The protein localises to the nucleus. It carries out the reaction RNA(n) + ATP = RNA(n)-3'-adenine ribonucleotide + diphosphate. In terms of biological role, polymerase that creates the 3'-poly(A) tail of mRNA's. May acquire specificity through interaction with a cleavage and polyadenylation factor. This chain is Poly(A) polymerase, found in Entamoeba histolytica (strain ATCC 30459 / HM-1:IMSS / ABRM).